A 98-amino-acid polypeptide reads, in one-letter code: uncharacterized protein (98 aa).

Positions 19–31 are enriched in basic residues; that stretch reads RRMSKRSKNKAKK. Residues 19–47 form a disordered region; it reads RRMSKRSKNKAKKERVPVEDRPPTPMPTS.

This sequence belongs to the lymphocryptovirus BNLF2b family.

This is an uncharacterized protein from Homo sapiens (Human).